A 535-amino-acid polypeptide reads, in one-letter code: MEEGRRGDREAKSAAGWTALSTTKTTLEEKRRLQANGSVGGDAGTSGFRRIVRLFFACMVAGGIQYGWALQLSLLSPYSQTLGISHSYVSLTWICGPIAGFVVQPIVGYYSDRCTMKMGRRRPFILVGCLIICISVMIIGFSADIGRHLGDTKEHCSTYTGPRWSAAMVYIVGFWFLDFANNTVQGPARAMMADLSAGHHGPNVGQSIFSLWMAIGSVLGYLSGANGKWHEWFPWLKTAACCDACANLKGAFFTAVLLIVVSMTVTMYLADEMPLDKQDVDTSGGGGCAVFVDLFKSLRNLPPAMFKVLAVTAVTWLSWFPFIQYNTDWMGREIYHGEPQGTAAKADVYDAGVREGAMGLLFCSVALGVTSFVIPKLCRRLTSKVVWSISNFLVFALMAVMVAVGMVSMRGYRPSLAAGLTGPDPTLKAVALVVFALIGIPQAVLFSVPWAVASEVTAEEGGGQGLAIGVLNIAIVVPQLVIALTAGPIDGAFNKGNTPAFGIGGAFAFICGVLALIWLPKTRGVSNAAVVAGGH.

The Cytoplasmic segment spans residues 1 to 53 (MEEGRRGDREAKSAAGWTALSTTKTTLEEKRRLQANGSVGGDAGTSGFRRIVR). The chain crosses the membrane as a helical span at residues 54-74 (LFFACMVAGGIQYGWALQLSL). Over 75 to 87 (LSPYSQTLGISHS) the chain is Extracellular. A helical transmembrane segment spans residues 88-108 (YVSLTWICGPIAGFVVQPIVG). At 109–122 (YYSDRCTMKMGRRR) the chain is on the cytoplasmic side. Residues 123 to 143 (PFILVGCLIICISVMIIGFSA) traverse the membrane as a helical segment. At 144–163 (DIGRHLGDTKEHCSTYTGPR) the chain is on the extracellular side. A helical transmembrane segment spans residues 164–184 (WSAAMVYIVGFWFLDFANNTV). Residues 185–203 (QGPARAMMADLSAGHHGPN) are Cytoplasmic-facing. The helical transmembrane segment at 204–224 (VGQSIFSLWMAIGSVLGYLSG) threads the bilayer. Topologically, residues 225 to 249 (ANGKWHEWFPWLKTAACCDACANLK) are extracellular. A helical transmembrane segment spans residues 250–270 (GAFFTAVLLIVVSMTVTMYLA). At 271 to 302 (DEMPLDKQDVDTSGGGGCAVFVDLFKSLRNLP) the chain is on the cytoplasmic side. Residues 303-323 (PAMFKVLAVTAVTWLSWFPFI) form a helical membrane-spanning segment. At 324–354 (QYNTDWMGREIYHGEPQGTAAKADVYDAGVR) the chain is on the extracellular side. Residues 355 to 375 (EGAMGLLFCSVALGVTSFVIP) form a helical membrane-spanning segment. At 376–384 (KLCRRLTSK) the chain is on the cytoplasmic side. Residues 385–405 (VVWSISNFLVFALMAVMVAVG) traverse the membrane as a helical segment. The Extracellular portion of the chain corresponds to 406-429 (MVSMRGYRPSLAAGLTGPDPTLKA). A helical membrane pass occupies residues 430–450 (VALVVFALIGIPQAVLFSVPW). The Cytoplasmic portion of the chain corresponds to 451 to 465 (AVASEVTAEEGGGQG). A helical transmembrane segment spans residues 466–486 (LAIGVLNIAIVVPQLVIALTA). At 487–498 (GPIDGAFNKGNT) the chain is on the extracellular side. A helical transmembrane segment spans residues 499–519 (PAFGIGGAFAFICGVLALIWL). Over 520-535 (PKTRGVSNAAVVAGGH) the chain is Cytoplasmic.

This sequence belongs to the glycoside-pentoside-hexuronide (GPH) cation symporter transporter (TC 2.A.2.4) family. In terms of assembly, homodimer.

The protein localises to the cell membrane. It functions in the pathway glycan biosynthesis; sucrose metabolism. Functionally, responsible for the transport of sucrose into the cell, with the concomitant uptake of protons (symport system). May also transport other glucosides. In Oryza sativa subsp. indica (Rice), this protein is Sucrose transport protein SUT5 (SUT5).